A 2511-amino-acid chain; its full sequence is Fatty acid synthase (2511 aa).

Methionine 1 is subject to N-acetylmethionine. A Ketosynthase family 3 (KS3) domain is found at 1 to 406 (MEEVVIAGMS…GSNVHIILRP (406 aa)). Serine 63 carries the phosphoserine modification. Lysine 70 bears the N6-acetyllysine mark. The active-site For beta-ketoacyl synthase activity is cysteine 161. Phosphoserine is present on serine 207. The active-site For beta-ketoacyl synthase activity is the histidine 293. At lysine 298 the chain carries N6-acetyllysine. Histidine 331 acts as the For beta-ketoacyl synthase activity in catalysis. An acyl and malonyl transferases region spans residues 429–817 (RTPEAVQKLL…IDANPNALFP (389 aa)). Residues lysine 436 and lysine 528 each carry the N6-acetyllysine modification. The active-site For malonyltransferase activity is the serine 581. Residues 647-648 (DT) and phenylalanine 671 contribute to the an acyl-CoA site. At lysine 673 the chain carries N6-acetyllysine. Residue serine 725 is modified to Phosphoserine. Arginine 773 provides a ligand contact to an acyl-CoA. The segment at 838–966 (HSLAWDVPAA…KVYQWDDPDP (129 aa)) is N-terminal hotdog fold. The region spanning 838 to 1108 (HSLAWDVPAA…TESAPRRQQE (271 aa)) is the PKS/mFAS DH domain. Residue histidine 878 is the Proton acceptor; for dehydratase activity of the active site. Residues 981–1108 (EPLFLAQAEV…TESAPRRQQE (128 aa)) are C-terminal hotdog fold. Lysine 992 is subject to N6-acetyllysine. Aspartate 1031 serves as the catalytic Proton donor; for dehydratase activity. Phosphoserine occurs at positions 1174 and 1411. Residue cysteine 1471 is modified to S-nitrosocysteine. Serine 1584 and serine 1594 each carry phosphoserine. Positions 1635–1863 (DVPSNWTLEE…VQVLAEEPEA (229 aa)) are enoyl reductase. 1671-1688 (LLIHSGSGGVGQAAIAIA) lines the NADP(+) pocket. At lysine 1704 the chain carries N6-(pyridoxal phosphate)lysine; alternate. An N6-acetyllysine; alternate modification is found at lysine 1704. Residues lysine 1771 and lysine 1847 each carry the N6-acetyllysine modification. The tract at residues 1864–2118 (VLKGAKPKLM…FVLAEKAAAY (255 aa)) is beta-ketoacyl reductase. NADP(+) is bound at residue 1886–1901 (SYIIAGGLGGFGLELA). Lysine 1995 is subject to N6-acetyllysine. An S-nitrosocysteine modification is found at cysteine 2091. Positions 2121-2198 (RDSQRDLVEA…ELSSKADEAS (78 aa)) constitute a Carrier domain. Serine 2156 is modified (O-(pantetheine 4'-phosphoryl)serine; alternate). At serine 2156 the chain carries Phosphoserine; alternate. At serine 2198 the chain carries Phosphoserine. Threonine 2204 and threonine 2215 each carry phosphothreonine. Residues 2207–2511 (EDGLAQQQTQ…AEPRVSVREG (305 aa)) are thioesterase. Residue serine 2236 is modified to Phosphoserine. Catalysis depends on serine 2308, which acts as the For thioesterase activity. Position 2391 is an N6-acetyllysine (lysine 2391). A Glycyl lysine isopeptide (Lys-Gly) (interchain with G-Cter in SUMO2) cross-link involves residue lysine 2449. The For thioesterase activity role is filled by histidine 2481.

As to quaternary structure, homodimer which is arranged in a head to tail fashion. Interacts with CEACAM1; this interaction is insulin and phosphorylation-dependent; reduces fatty-acid synthase activity. Post-translationally, S-nitrosylation of Fatty acid synthase at cysteine residues Cys-1471 or Cys-2091 is important for the enzyme dimerization. In adipocytes, S-nitrosylation of Fatty acid synthase occurs under physiological conditions and gradually increases during adipogenesis. As to expression, ubiquitous. Prominent expression in brain, lung, liver and mammary gland.

The protein localises to the cytoplasm. It is found in the melanosome. It catalyses the reaction acetyl-CoA + n malonyl-CoA + 2n NADPH + 2n H(+) = a long-chain fatty acid + (n+1) CoA + n CO2 + 2n NADP(+).. It carries out the reaction holo-[ACP] + acetyl-CoA = acetyl-[ACP] + CoA. The catalysed reaction is holo-[ACP] + malonyl-CoA = malonyl-[ACP] + CoA. The enzyme catalyses a fatty acyl-[ACP] + malonyl-[ACP] + H(+) = a 3-oxoacyl-[ACP] + holo-[ACP] + CO2. It catalyses the reaction a (3R)-hydroxyacyl-[ACP] + NADP(+) = a 3-oxoacyl-[ACP] + NADPH + H(+). It carries out the reaction a (3R)-hydroxyacyl-[ACP] = a (2E)-enoyl-[ACP] + H2O. The catalysed reaction is a 2,3-saturated acyl-[ACP] + NADP(+) = a (2E)-enoyl-[ACP] + NADPH + H(+). The enzyme catalyses hexadecanoyl-[ACP] + H2O = hexadecanoate + holo-[ACP] + H(+). It catalyses the reaction acetyl-[ACP] + malonyl-[ACP] + H(+) = 3-oxobutanoyl-[ACP] + holo-[ACP] + CO2. It carries out the reaction 3-oxobutanoyl-[ACP] + NADPH + H(+) = (3R)-hydroxybutanoyl-[ACP] + NADP(+). The catalysed reaction is (3R)-hydroxybutanoyl-[ACP] = (2E)-butenoyl-[ACP] + H2O. The enzyme catalyses (2E)-butenoyl-[ACP] + NADPH + H(+) = butanoyl-[ACP] + NADP(+). It catalyses the reaction butanoyl-[ACP] + malonyl-[ACP] + H(+) = 3-oxohexanoyl-[ACP] + holo-[ACP] + CO2. It carries out the reaction 3-oxohexanoyl-[ACP] + NADPH + H(+) = (3R)-hydroxyhexanoyl-[ACP] + NADP(+). The catalysed reaction is (3R)-hydroxyhexanoyl-[ACP] = (2E)-hexenoyl-[ACP] + H2O. The enzyme catalyses (2E)-hexenoyl-[ACP] + NADPH + H(+) = hexanoyl-[ACP] + NADP(+). It catalyses the reaction hexanoyl-[ACP] + malonyl-[ACP] + H(+) = 3-oxooctanoyl-[ACP] + holo-[ACP] + CO2. It carries out the reaction 3-oxooctanoyl-[ACP] + NADPH + H(+) = (3R)-hydroxyoctanoyl-[ACP] + NADP(+). The catalysed reaction is (3R)-hydroxyoctanoyl-[ACP] = (2E)-octenoyl-[ACP] + H2O. The enzyme catalyses (2E)-octenoyl-[ACP] + NADPH + H(+) = octanoyl-[ACP] + NADP(+). It catalyses the reaction octanoyl-[ACP] + malonyl-[ACP] + H(+) = 3-oxodecanoyl-[ACP] + holo-[ACP] + CO2. It carries out the reaction 3-oxodecanoyl-[ACP] + NADPH + H(+) = (3R)-hydroxydecanoyl-[ACP] + NADP(+). The catalysed reaction is (3R)-hydroxydecanoyl-[ACP] = (2E)-decenoyl-[ACP] + H2O. The enzyme catalyses (2E)-decenoyl-[ACP] + NADPH + H(+) = decanoyl-[ACP] + NADP(+). It catalyses the reaction decanoyl-[ACP] + malonyl-[ACP] + H(+) = 3-oxododecanoyl-[ACP] + holo-[ACP] + CO2. It carries out the reaction 3-oxododecanoyl-[ACP] + NADPH + H(+) = (3R)-hydroxydodecanoyl-[ACP] + NADP(+). The catalysed reaction is (3R)-hydroxydodecanoyl-[ACP] = (2E)-dodecenoyl-[ACP] + H2O. The enzyme catalyses (2E)-dodecenoyl-[ACP] + NADPH + H(+) = dodecanoyl-[ACP] + NADP(+). It catalyses the reaction dodecanoyl-[ACP] + malonyl-[ACP] + H(+) = 3-oxotetradecanoyl-[ACP] + holo-[ACP] + CO2. It carries out the reaction 3-oxotetradecanoyl-[ACP] + NADPH + H(+) = (3R)-hydroxytetradecanoyl-[ACP] + NADP(+). The catalysed reaction is (3R)-hydroxytetradecanoyl-[ACP] = (2E)-tetradecenoyl-[ACP] + H2O. The enzyme catalyses (2E)-tetradecenoyl-[ACP] + NADPH + H(+) = tetradecanoyl-[ACP] + NADP(+). It catalyses the reaction tetradecanoyl-[ACP] + malonyl-[ACP] + H(+) = 3-oxohexadecanoyl-[ACP] + holo-[ACP] + CO2. It carries out the reaction 3-oxohexadecanoyl-[ACP] + NADPH + H(+) = (3R)-hydroxyhexadecanoyl-[ACP] + NADP(+). The catalysed reaction is (3R)-hydroxyhexadecanoyl-[ACP] = (2E)-hexadecenoyl-[ACP] + H2O. The enzyme catalyses (2E)-hexadecenoyl-[ACP] + NADPH + H(+) = hexadecanoyl-[ACP] + NADP(+). It catalyses the reaction hexadecanoyl-[ACP] + malonyl-[ACP] + H(+) = 3-oxooctadecanoyl-[ACP] + holo-[ACP] + CO2. It carries out the reaction 3-oxooctadecanoyl-[ACP] + NADPH + H(+) = (3R)-hydroxyoctadecanoyl-[ACP] + NADP(+). The catalysed reaction is (3R)-hydroxyoctadecanoyl-[ACP] = (2E)-octadecenoyl-[ACP] + H2O. The enzyme catalyses (2E)-octadecenoyl-[ACP] + NADPH + H(+) = octadecanoyl-[ACP] + NADP(+). It catalyses the reaction tetradecanoyl-[ACP] + H2O = tetradecanoate + holo-[ACP] + H(+). It carries out the reaction octadecanoyl-[ACP] + H2O = octadecanoate + holo-[ACP] + H(+). It functions in the pathway lipid metabolism; fatty acid biosynthesis. With respect to regulation, activated by S-nitrosylation which promotes enzyme dimerization. Cerulenin, a potent non-competitive pharmacological inhibitor of FAS, binds covalently to the active site of the condensing enzyme region, inactivating a key enzyme step in fatty acid synthesis. Its function is as follows. Fatty acid synthetase is a multifunctional enzyme that catalyzes the de novo biosynthesis of long-chain saturated fatty acids starting from acetyl-CoA and malonyl-CoA in the presence of NADPH. This multifunctional protein contains 7 catalytic activities and a site for the binding of the prosthetic group 4'-phosphopantetheine of the acyl carrier protein ([ACP]) domain. In terms of biological role, (Microbial infection) Fatty acid synthetase activity is required for SARS coronavirus-2/SARS-CoV-2 replication. The polypeptide is Fatty acid synthase (FASN) (Homo sapiens (Human)).